The primary structure comprises 99 residues: NAD(P)H-quinone oxidoreductase subunit 4L, chloroplastic (99 aa).

The next 3 membrane-spanning stretches (helical) occupy residues M1–I21, M31–F51, and I59–A79.

It belongs to the complex I subunit 4L family. In terms of assembly, NDH is composed of at least 16 different subunits, 5 of which are encoded in the nucleus.

The protein localises to the plastid. It localises to the chloroplast thylakoid membrane. The enzyme catalyses a plastoquinone + NADH + (n+1) H(+)(in) = a plastoquinol + NAD(+) + n H(+)(out). The catalysed reaction is a plastoquinone + NADPH + (n+1) H(+)(in) = a plastoquinol + NADP(+) + n H(+)(out). In terms of biological role, NDH shuttles electrons from NAD(P)H:plastoquinone, via FMN and iron-sulfur (Fe-S) centers, to quinones in the photosynthetic chain and possibly in a chloroplast respiratory chain. The immediate electron acceptor for the enzyme in this species is believed to be plastoquinone. Couples the redox reaction to proton translocation, and thus conserves the redox energy in a proton gradient. The polypeptide is NAD(P)H-quinone oxidoreductase subunit 4L, chloroplastic (Adiantum capillus-veneris (Maidenhair fern)).